Reading from the N-terminus, the 700-residue chain is Elongation factor G (700 aa).

The 283-residue stretch at 8-290 (DKYRNIGISA…AVVELLPSPL (283 aa)) folds into the tr-type G domain. GTP-binding positions include 17-24 (AHIDAGKT), 88-92 (DTPGH), and 142-145 (NKMD).

Belongs to the TRAFAC class translation factor GTPase superfamily. Classic translation factor GTPase family. EF-G/EF-2 subfamily.

It is found in the cytoplasm. Functionally, catalyzes the GTP-dependent ribosomal translocation step during translation elongation. During this step, the ribosome changes from the pre-translocational (PRE) to the post-translocational (POST) state as the newly formed A-site-bound peptidyl-tRNA and P-site-bound deacylated tRNA move to the P and E sites, respectively. Catalyzes the coordinated movement of the two tRNA molecules, the mRNA and conformational changes in the ribosome. This Polynucleobacter necessarius subsp. necessarius (strain STIR1) protein is Elongation factor G.